The primary structure comprises 650 residues: SUMO-activating enzyme subunit 2 (650 aa).

Residues 25–30 (GAGGIG), D49, 57–60 (NLNR), K73, 96–97 (SI), and 118–123 (DNRAAR) contribute to the ATP site. 2 residues coordinate Zn(2+): C159 and C162. The Glycyl thioester intermediate role is filled by C174. Residue K191 forms a Glycyl lysine isopeptide (Lys-Gly) (interchain with G-Cter in SUMO) linkage. Residue K237 forms a Glycyl lysine isopeptide (Lys-Gly) (interchain with G-Cter in SUMO1) linkage. Glycyl lysine isopeptide (Lys-Gly) (interchain with G-Cter in SUMO) cross-links involve residues K258, K282, and K286. Zn(2+)-binding residues include C446 and C449. A disordered region spans residues 554-650 (DAPDKAPAPS…DDDEDIIALD (97 aa)). Over residues 572–586 (ANGNKDSAQPSTSSK) the composition is skewed to polar residues. Positions 590 to 603 (EDDDVLLVDSDEEP) are enriched in acidic residues. The residue at position 599 (S599) is a Phosphoserine. Glycyl lysine isopeptide (Lys-Gly) (interchain with G-Cter in SUMO) cross-links involve residues K618 and K630. Over residues 638–650 (PADDDDEDIIALD) the composition is skewed to acidic residues.

This sequence belongs to the ubiquitin-activating E1 family. As to quaternary structure, heterodimer of sae1 and uba2/sae2. The heterodimer corresponds to the two domains that are encoded on a single polypeptide chain in ubiquitin-activating enzyme E1. Interacts with ube2i. Post-translationally, sumoylated with SUMO1 and SUMO2/3 and by UBC9. Sumoylation at Lys-237 inhibits enzymatic activity. Sumoylation at the C-terminal lysine cluster plays an essential role in nuclear trafficking. Expressed in eye, brain and pectoral fins.

It is found in the cytoplasm. It localises to the nucleus. Its pathway is protein modification; protein sumoylation. In terms of biological role, the heterodimer acts as an E1 ligase for sumo1, sumo2, and sumo3. It mediates ATP-dependent activation of sumo proteins followed by formation of a thioester bond between a sumo protein and a conserved active site cysteine residue on uba2/sae2. The chain is SUMO-activating enzyme subunit 2 (uba2) from Danio rerio (Zebrafish).